Here is a 313-residue protein sequence, read N- to C-terminus: Probable myosin light chain kinase DDB_G0292624 (313 aa).

Residues 6 to 264 form the Protein kinase domain; the sequence is YELHKEIGKG…AKQALEHPWI (259 aa). ATP is bound by residues 12–20 and Lys-35; that span reads IGKGAFSVV. Asp-125 (proton acceptor) is an active-site residue.

This sequence belongs to the protein kinase superfamily. CAMK Ser/Thr protein kinase family. CaMK subfamily.

The enzyme catalyses L-seryl-[myosin light chain] + ATP = O-phospho-L-seryl-[myosin light chain] + ADP + H(+). It carries out the reaction L-threonyl-[myosin light chain] + ATP = O-phospho-L-threonyl-[myosin light chain] + ADP + H(+). Does not have a calmodulin-binding domain. Functionally, may phosphorylate a specific serine in the N-terminus of a myosin light chain. The protein is Probable myosin light chain kinase DDB_G0292624 of Dictyostelium discoideum (Social amoeba).